A 341-amino-acid polypeptide reads, in one-letter code: Flap endonuclease 1 (341 aa).

The segment at 1–98 is N-domain; the sequence is MGVQIGELIP…RELEKRREAR (98 aa). Residues D27, D80, E152, E154, D173, D175, and D236 each contribute to the Mg(2+) site. An I-domain region spans residues 116–258; it reads EAKKYAMRAT…KALTIVKRTK (143 aa). The segment at 330-338 is interaction with PCNA; the sequence is KQSTLESWF.

It belongs to the XPG/RAD2 endonuclease family. FEN1 subfamily. Interacts with PCNA. PCNA stimulates the nuclease activity without altering cleavage specificity. The cofactor is Mg(2+).

Its function is as follows. Structure-specific nuclease with 5'-flap endonuclease and 5'-3' exonuclease activities involved in DNA replication and repair. During DNA replication, cleaves the 5'-overhanging flap structure that is generated by displacement synthesis when DNA polymerase encounters the 5'-end of a downstream Okazaki fragment. Binds the unpaired 3'-DNA end and kinks the DNA to facilitate 5' cleavage specificity. Cleaves one nucleotide into the double-stranded DNA from the junction in flap DNA, leaving a nick for ligation. Also involved in the base excision repair (BER) pathway. Acts as a genome stabilization factor that prevents flaps from equilibrating into structures that lead to duplications and deletions. Also possesses 5'-3' exonuclease activity on nicked or gapped double-stranded DNA. This chain is Flap endonuclease 1, found in Thermococcus onnurineus (strain NA1).